The chain runs to 84 residues: Serine protease inhibitor Kazal-type 2 (84 aa).

An N-terminal signal peptide occupies residues 1–23 (MALSVLRLALLLLAVTFAASLIP). A Pyrrolidone carboxylic acid modification is found at Q24. One can recognise a Kazal-like domain in the interval 30-84 (KYRTPNCSQYRLPGCPRHFNPVCGSDMSTYANECTLCMKIREGGHNIKIIRNGPC). Intrachain disulfides connect C36–C66, C44–C63, and C52–C84.

Expressed in epididymis (at protein level).

Its subcellular location is the secreted. It is found in the cytoplasmic vesicle. It localises to the secretory vesicle. The protein localises to the acrosome. Functionally, as a strong inhibitor of acrosin, it is required for normal spermiogenesis. It probably hinders premature activation of proacrosin and other proteases, thus preventing the cascade of events leading to spermiogenesis defects. May be involved in the regulation of serine protease-dependent germ cell apoptosis. It also inhibits trypsin. This is Serine protease inhibitor Kazal-type 2 (SPINK2) from Homo sapiens (Human).